Here is a 144-residue protein sequence, read N- to C-terminus: Ribosomal RNA large subunit methyltransferase H (144 aa).

S-adenosyl-L-methionine-binding positions include L68, G96, and 112 to 117; that span reads FSKLTF.

Belongs to the RNA methyltransferase RlmH family. Homodimer.

It is found in the cytoplasm. It carries out the reaction pseudouridine(1915) in 23S rRNA + S-adenosyl-L-methionine = N(3)-methylpseudouridine(1915) in 23S rRNA + S-adenosyl-L-homocysteine + H(+). Its function is as follows. Specifically methylates the pseudouridine at position 1915 (m3Psi1915) in 23S rRNA. This is Ribosomal RNA large subunit methyltransferase H from Mycoplasmopsis synoviae (strain 53) (Mycoplasma synoviae).